A 253-amino-acid chain; its full sequence is Triosephosphate isomerase (253 aa).

9–11 (NWK) contacts substrate. The active-site Electrophile is H95. The active-site Proton acceptor is E167. Substrate is bound by residues G173, S213, and 234–235 (GG). The residue at position 213 (S213) is a Phosphoserine.

It belongs to the triosephosphate isomerase family. In terms of assembly, homodimer.

It is found in the cytoplasm. It carries out the reaction D-glyceraldehyde 3-phosphate = dihydroxyacetone phosphate. The protein operates within carbohydrate biosynthesis; gluconeogenesis. It functions in the pathway carbohydrate degradation; glycolysis; D-glyceraldehyde 3-phosphate from glycerone phosphate: step 1/1. Functionally, involved in the gluconeogenesis. Catalyzes stereospecifically the conversion of dihydroxyacetone phosphate (DHAP) to D-glyceraldehyde-3-phosphate (G3P). The protein is Triosephosphate isomerase of Bacillus licheniformis (strain ATCC 14580 / DSM 13 / JCM 2505 / CCUG 7422 / NBRC 12200 / NCIMB 9375 / NCTC 10341 / NRRL NRS-1264 / Gibson 46).